The chain runs to 792 residues: uncharacterized protein (792 aa).

Residue 361–362 participates in substrate binding; that stretch reads WD. The Proton donor role is filled by Glu-488. 590–591 contributes to the substrate binding site; sequence KQ. The tract at residues 753-792 is disordered; the sequence is DSPSTIAVRDRKPLLPPPSQPPGREPVSRRHKSLIISAAR. Pro residues predominate over residues 766–776; the sequence is LLPPPSQPPGR.

The protein belongs to the glycosyl hydrolase 65 family.

This is an uncharacterized protein from Mycobacterium leprae (strain TN).